The sequence spans 192 residues: Ion-translocating oxidoreductase complex subunit B (192 aa).

The segment at 1-26 (MSAVWIAVIAISLLGLIFGLILGYAS) is hydrophobic. In terms of domain architecture, 4Fe-4S spans 32-91 (QDDPVVEKIDELLPQSQCGQCGYPGCRPYAEAVGAQGEKINRCAPGGEAVMLKIAALLNV). [4Fe-4S] cluster-binding residues include C49, C52, C57, C74, C117, C120, C123, C127, C147, C150, C153, and C157. 4Fe-4S ferredoxin-type domains lie at 108 to 137 (MLAV…GATR) and 138 to 167 (AMHT…LVPV).

This sequence belongs to the 4Fe4S bacterial-type ferredoxin family. RnfB subfamily. The complex is composed of six subunits: RnfA, RnfB, RnfC, RnfD, RnfE and RnfG. It depends on [4Fe-4S] cluster as a cofactor.

It is found in the cell inner membrane. Part of a membrane-bound complex that couples electron transfer with translocation of ions across the membrane. The sequence is that of Ion-translocating oxidoreductase complex subunit B from Klebsiella pneumoniae (strain 342).